The chain runs to 125 residues: Small ribosomal subunit protein bS6 (125 aa).

Positions 99–125 (ASPMVKAKDERRASAEVENNDFEDAEE) are disordered. Residues 104–113 (KAKDERRASA) show a composition bias toward basic and acidic residues. The span at 116 to 125 (ENNDFEDAEE) shows a compositional bias: acidic residues.

This sequence belongs to the bacterial ribosomal protein bS6 family.

Functionally, binds together with bS18 to 16S ribosomal RNA. This chain is Small ribosomal subunit protein bS6, found in Mannheimia succiniciproducens (strain KCTC 0769BP / MBEL55E).